The primary structure comprises 216 residues: 3-isopropylmalate dehydratase small subunit 1 (216 aa).

This sequence belongs to the LeuD family. LeuD type 1 subfamily. As to quaternary structure, heterodimer of LeuC and LeuD.

The catalysed reaction is (2R,3S)-3-isopropylmalate = (2S)-2-isopropylmalate. It participates in amino-acid biosynthesis; L-leucine biosynthesis; L-leucine from 3-methyl-2-oxobutanoate: step 2/4. Catalyzes the isomerization between 2-isopropylmalate and 3-isopropylmalate, via the formation of 2-isopropylmaleate. This Bordetella bronchiseptica (strain ATCC BAA-588 / NCTC 13252 / RB50) (Alcaligenes bronchisepticus) protein is 3-isopropylmalate dehydratase small subunit 1.